The chain runs to 201 residues: Large ribosomal subunit protein bL25 (201 aa).

The protein belongs to the bacterial ribosomal protein bL25 family. CTC subfamily. As to quaternary structure, part of the 50S ribosomal subunit; part of the 5S rRNA/L5/L18/L25 subcomplex. Contacts the 5S rRNA. Binds to the 5S rRNA independently of L5 and L18.

Its function is as follows. This is one of the proteins that binds to the 5S RNA in the ribosome where it forms part of the central protuberance. This is Large ribosomal subunit protein bL25 from Ectopseudomonas mendocina (strain ymp) (Pseudomonas mendocina).